Here is a 221-residue protein sequence, read N- to C-terminus: ATP-dependent dethiobiotin synthetase BioD (221 aa).

Position 11 to 16 (11 to 16 (DIGKTL)) interacts with ATP. Position 15 (Thr15) interacts with Mg(2+). Lys35 is an active-site residue. Residue Thr39 participates in substrate binding. ATP-binding positions include Asp44 and 103 to 106 (EGAG). The Mg(2+) site is built by Asp44 and Glu103.

Belongs to the dethiobiotin synthetase family. In terms of assembly, homodimer. Requires Mg(2+) as cofactor.

Its subcellular location is the cytoplasm. The enzyme catalyses (7R,8S)-7,8-diammoniononanoate + CO2 + ATP = (4R,5S)-dethiobiotin + ADP + phosphate + 3 H(+). The protein operates within cofactor biosynthesis; biotin biosynthesis; biotin from 7,8-diaminononanoate: step 1/2. Catalyzes a mechanistically unusual reaction, the ATP-dependent insertion of CO2 between the N7 and N8 nitrogen atoms of 7,8-diaminopelargonic acid (DAPA, also called 7,8-diammoniononanoate) to form a ureido ring. This is ATP-dependent dethiobiotin synthetase BioD from Leptospira borgpetersenii serovar Hardjo-bovis (strain L550).